The following is a 331-amino-acid chain: Anthranilate phosphoribosyltransferase (331 aa).

5-phospho-alpha-D-ribose 1-diphosphate is bound by residues glycine 81, 84–85 (GD), serine 89, 91–94 (NCST), 109–117 (KHGNRAVSS), and serine 121. Glycine 81 is an anthranilate binding site. Residue serine 93 coordinates Mg(2+). Asparagine 112 serves as a coordination point for anthranilate. Arginine 167 lines the anthranilate pocket. Mg(2+) is bound by residues aspartate 226 and glutamate 227.

Belongs to the anthranilate phosphoribosyltransferase family. In terms of assembly, homodimer. Requires Mg(2+) as cofactor.

The enzyme catalyses N-(5-phospho-beta-D-ribosyl)anthranilate + diphosphate = 5-phospho-alpha-D-ribose 1-diphosphate + anthranilate. It functions in the pathway amino-acid biosynthesis; L-tryptophan biosynthesis; L-tryptophan from chorismate: step 2/5. Its function is as follows. Catalyzes the transfer of the phosphoribosyl group of 5-phosphorylribose-1-pyrophosphate (PRPP) to anthranilate to yield N-(5'-phosphoribosyl)-anthranilate (PRA). This Oleidesulfovibrio alaskensis (strain ATCC BAA-1058 / DSM 17464 / G20) (Desulfovibrio alaskensis) protein is Anthranilate phosphoribosyltransferase.